Reading from the N-terminus, the 371-residue chain is Putative F-box/kelch-repeat protein At3g10510 (371 aa).

Positions 13–61 (SVMTSIPDDVIMECIAPRVPRYNHSMLSLVSKQFRSLVASPRLYKTRSL) constitute an F-box domain. Kelch repeat units lie at residues 123–165 (NIFV…DMPV), 178–229 (KIYI…GPSS), and 257–305 (NECV…YIVS).

This chain is Putative F-box/kelch-repeat protein At3g10510, found in Arabidopsis thaliana (Mouse-ear cress).